We begin with the raw amino-acid sequence, 413 residues long: Multifunctional CCA protein (413 aa).

The ATP site is built by Gly8 and Arg11. Positions 8 and 11 each coordinate CTP. The Mg(2+) site is built by Asp21 and Asp23. 3 residues coordinate ATP: Arg91, Arg143, and Arg146. CTP is bound by residues Arg91, Arg143, and Arg146. In terms of domain architecture, HD spans 232-333; sequence TGVHVMMVID…VRLLERADAL (102 aa).

This sequence belongs to the tRNA nucleotidyltransferase/poly(A) polymerase family. Bacterial CCA-adding enzyme type 1 subfamily. As to quaternary structure, monomer. Can also form homodimers and oligomers. Requires Mg(2+) as cofactor. Ni(2+) serves as cofactor.

The catalysed reaction is a tRNA precursor + 2 CTP + ATP = a tRNA with a 3' CCA end + 3 diphosphate. It catalyses the reaction a tRNA with a 3' CCA end + 2 CTP + ATP = a tRNA with a 3' CCACCA end + 3 diphosphate. Catalyzes the addition and repair of the essential 3'-terminal CCA sequence in tRNAs without using a nucleic acid template. Adds these three nucleotides in the order of C, C, and A to the tRNA nucleotide-73, using CTP and ATP as substrates and producing inorganic pyrophosphate. tRNA 3'-terminal CCA addition is required both for tRNA processing and repair. Also involved in tRNA surveillance by mediating tandem CCA addition to generate a CCACCA at the 3' terminus of unstable tRNAs. While stable tRNAs receive only 3'-terminal CCA, unstable tRNAs are marked with CCACCA and rapidly degraded. The protein is Multifunctional CCA protein of Burkholderia mallei (strain NCTC 10247).